A 262-amino-acid chain; its full sequence is MGAQLCFEANAKAPREALRFHAEAKGAQVRLDTRGCIAHRRTTFHDGIVFSQRPVRLGERVALRVLREESGWCGGLRVGFTRLDPACVSVPSLPPFLCPDLEEQSPTWAAVLPEGCALTGDLVRFWVDRRGCLFAKVNAGCRLLLREGVPVGAPLWAVMDVYGTTKAIELLDPTASRLPTPMPWDLSNKAVPEPKATPGEECAICFYHAANTRLVPCGHTYFCRYCAWRVFSDTAKCPVCRWQIEAVAPAQGPPALRVEEGS.

The NHR domain occupies 17 to 173 (ALRFHAEAKG…TTKAIELLDP (157 aa)). An RING-type zinc finger spans residues 202 to 241 (CAICFYHAANTRLVPCGHTYFCRYCAWRVFSDTAKCPVCR).

(Microbial infection) Interacts with hepatitis C virus protein E1; this interaction prevents E1 interaction with E2 and subsequently inhibits viral infection.

Its subcellular location is the cytoplasm. It catalyses the reaction S-ubiquitinyl-[E2 ubiquitin-conjugating enzyme]-L-cysteine + [acceptor protein]-L-lysine = [E2 ubiquitin-conjugating enzyme]-L-cysteine + N(6)-ubiquitinyl-[acceptor protein]-L-lysine.. Its pathway is protein modification; protein ubiquitination. E3 ubiquitin-protein ligase that plays a role in various biological processes such as lung development or innate immunity. Seems to utilize UBE2E1. Promotes innate antiviral response by catalyzing 'Lys-63'-linked ubiquitination of IRF7. Also inhibits hepatitis C virus assembly by directly binding to viral E1 envelope glycoprotein to disrupt its interaction with E2. Plays an essential role in TLR4-mediated activation of MAPK pathways by promoting 'Lys-48'-linked polyubiquitination of the phosphatase DUSP1/MKP1. In Homo sapiens (Human), this protein is E3 ubiquitin-protein ligase NEURL3 (NEURL3).